A 348-amino-acid chain; its full sequence is S-adenosylmethionine-dependent nucleotide dehydratase RSAD2 (348 aa).

In terms of domain architecture, Radical SAM core spans 56-276; the sequence is SATPSSVNYH…LERHSSISCL (221 aa). Residues cysteine 70, cysteine 74, and cysteine 77 each coordinate [4Fe-4S] cluster.

Belongs to the radical SAM superfamily. RSAD2 family. It depends on [4Fe-4S] cluster as a cofactor. In terms of tissue distribution, expressed at low levels in spleen and head kidney.

The protein localises to the endoplasmic reticulum membrane. Its function is as follows. Interferon-inducible iron-sulfur (4FE-4S) cluster-binding antiviral protein which plays a major role in the cell antiviral state induced by type I and type II interferon. The sequence is that of S-adenosylmethionine-dependent nucleotide dehydratase RSAD2 from Oncorhynchus mykiss (Rainbow trout).